Consider the following 133-residue polypeptide: ATP synthase epsilon chain (133 aa).

Belongs to the ATPase epsilon chain family. As to quaternary structure, F-type ATPases have 2 components, CF(1) - the catalytic core - and CF(0) - the membrane proton channel. CF(1) has five subunits: alpha(3), beta(3), gamma(1), delta(1), epsilon(1). CF(0) has three main subunits: a, b and c.

It is found in the cell membrane. Its function is as follows. Produces ATP from ADP in the presence of a proton gradient across the membrane. This chain is ATP synthase epsilon chain, found in Bacillus cereus (strain ATCC 14579 / DSM 31 / CCUG 7414 / JCM 2152 / NBRC 15305 / NCIMB 9373 / NCTC 2599 / NRRL B-3711).